The primary structure comprises 282 residues: Bifunctional protein FolD (282 aa).

Residues 165–167 (GRS), Ser190, and Thr231 each bind NADP(+).

This sequence belongs to the tetrahydrofolate dehydrogenase/cyclohydrolase family. In terms of assembly, homodimer.

The catalysed reaction is (6R)-5,10-methylene-5,6,7,8-tetrahydrofolate + NADP(+) = (6R)-5,10-methenyltetrahydrofolate + NADPH. The enzyme catalyses (6R)-5,10-methenyltetrahydrofolate + H2O = (6R)-10-formyltetrahydrofolate + H(+). It functions in the pathway one-carbon metabolism; tetrahydrofolate interconversion. In terms of biological role, catalyzes the oxidation of 5,10-methylenetetrahydrofolate to 5,10-methenyltetrahydrofolate and then the hydrolysis of 5,10-methenyltetrahydrofolate to 10-formyltetrahydrofolate. This chain is Bifunctional protein FolD, found in Clostridium botulinum (strain Alaska E43 / Type E3).